We begin with the raw amino-acid sequence, 503 residues long: Arginyl-tRNA--protein transferase 1 (503 aa).

This sequence belongs to the R-transferase family.

It localises to the cytoplasm. The catalysed reaction is an N-terminal L-alpha-aminoacyl-[protein] + L-arginyl-tRNA(Arg) = an N-terminal L-arginyl-L-aminoacyl-[protein] + tRNA(Arg) + H(+). Its function is as follows. Involved in the post-translational conjugation of arginine to the N-terminal aspartate or glutamate of a protein. This arginylation is required for degradation of the protein via the ubiquitin pathway. Does not arginylate cysteine residues. The protein is Arginyl-tRNA--protein transferase 1 (ATE1) of Saccharomyces cerevisiae (strain ATCC 204508 / S288c) (Baker's yeast).